The sequence spans 611 residues: Chaperone protein DnaK (611 aa).

Threonine 173 bears the Phosphothreonine; by autocatalysis mark. Positions 577-592 (QAAAGQAEGAEGAQDA) are enriched in low complexity. The segment at 577 to 598 (QAAAGQAEGAEGAQDAGAKKDN) is disordered.

This sequence belongs to the heat shock protein 70 family.

Acts as a chaperone. The protein is Chaperone protein DnaK of Bacillus anthracis (strain A0248).